We begin with the raw amino-acid sequence, 321 residues long: uncharacterized protein (321 aa).

This is an uncharacterized protein from Galliformes (FAdV-1).